A 357-amino-acid chain; its full sequence is NAD kinase 1 (357 aa).

The active-site Proton acceptor is D68. NAD(+) is bound by residues 68-69 (DG), R73, 175-176 (ND), R186, D205, A240, and Q275.

Belongs to the NAD kinase family. The cofactor is a divalent metal cation.

The protein resides in the cytoplasm. It catalyses the reaction NAD(+) + ATP = ADP + NADP(+) + H(+). Functionally, involved in the regulation of the intracellular balance of NAD and NADP, and is a key enzyme in the biosynthesis of NADP. Catalyzes specifically the phosphorylation on 2'-hydroxyl of the adenosine moiety of NAD to yield NADP. The polypeptide is NAD kinase 1 (Streptomyces avermitilis (strain ATCC 31267 / DSM 46492 / JCM 5070 / NBRC 14893 / NCIMB 12804 / NRRL 8165 / MA-4680)).